A 78-amino-acid chain; its full sequence is Acyl carrier protein (78 aa).

Positions 2–77 (SSIEERVKKI…LAINYINENL (76 aa)) constitute a Carrier domain. S37 is subject to O-(pantetheine 4'-phosphoryl)serine.

This sequence belongs to the acyl carrier protein (ACP) family. In terms of processing, 4'-phosphopantetheine is transferred from CoA to a specific serine of apo-ACP by AcpS. This modification is essential for activity because fatty acids are bound in thioester linkage to the sulfhydryl of the prosthetic group.

The protein localises to the cytoplasm. It functions in the pathway lipid metabolism; fatty acid biosynthesis. Carrier of the growing fatty acid chain in fatty acid biosynthesis. In Saccharophagus degradans (strain 2-40 / ATCC 43961 / DSM 17024), this protein is Acyl carrier protein.